Consider the following 113-residue polypeptide: uncharacterized protein (113 aa).

The protein to H.influenzae HI_1053 and P.denitrificans COX locus Uncharacterized protein 4.

This is an uncharacterized protein from Cupriavidus necator (strain ATCC 17699 / DSM 428 / KCTC 22496 / NCIMB 10442 / H16 / Stanier 337) (Ralstonia eutropha).